We begin with the raw amino-acid sequence, 706 residues long: Fatty acid oxidation complex subunit alpha (706 aa).

The enoyl-CoA hydratase stretch occupies residues 1-188; sequence MEKTFNLTRR…KMGLVNDVVP (188 aa). Positions 308–706 are 3-hydroxyacyl-CoA dehydrogenase; it reads RKVKKAVILG…TMARENVSFF (399 aa).

This sequence in the N-terminal section; belongs to the enoyl-CoA hydratase/isomerase family. In the central section; belongs to the 3-hydroxyacyl-CoA dehydrogenase family. In terms of assembly, heterotetramer of two alpha chains (FadJ) and two beta chains (FadI).

Its subcellular location is the cytoplasm. It catalyses the reaction a (3S)-3-hydroxyacyl-CoA = a (2E)-enoyl-CoA + H2O. The enzyme catalyses a 4-saturated-(3S)-3-hydroxyacyl-CoA = a (3E)-enoyl-CoA + H2O. The catalysed reaction is a (3S)-3-hydroxyacyl-CoA + NAD(+) = a 3-oxoacyl-CoA + NADH + H(+). It carries out the reaction (3S)-3-hydroxybutanoyl-CoA = (3R)-3-hydroxybutanoyl-CoA. It participates in lipid metabolism; fatty acid beta-oxidation. Its function is as follows. Catalyzes the formation of a hydroxyacyl-CoA by addition of water on enoyl-CoA. Also exhibits 3-hydroxyacyl-CoA epimerase and 3-hydroxyacyl-CoA dehydrogenase activities. The chain is Fatty acid oxidation complex subunit alpha from Shewanella sp. (strain W3-18-1).